Consider the following 954-residue polypeptide: MDGQLSLLSPTSSSSTSHSRKRLTKKQRPPSANHRTSSSFNVESLRIDAQSLDSKRSASSLRQGPNCNQSPSLARTVSVPVSVPSNAPAHTKASDLSLPRSHTTRSQSANRPYNPTQTIPTNRFILSPASSSQPQTQSPPYPSAVASTTVTSSRNKDTSKQYDPLDSCIGSFDQNKLSTDELIGAPFDGNAILSRIEATKLSAAPAPTSTTTIAHSNNISPRRVAPPPPPPPPALSRSNTDSKAARSSKPSKSPKSTISNKTMGASSFRHSASFSSAEQLPPSEKPSKSESSSSSNKRHSGDGKESRVPGMLRKKSGFSGFMNSLVGSPKKPLISAPENPVHVTHVGYDSNTGQFTGLPKEWQRLISESGITEKDRREHPQILVDVLTFYKETTEKPQEDQQLEKFHDARATDFRSPPVTGTAPLVLQTGVGYAHGPMSPMISPPASPRFPQVGHEGSFENPRAPPPVPKGPGPLPAKDINLIPSRPAPKPPAISTRPLVPPASLPAKDSGIGMPPPGDEAPMPYLPPKDNVQHMYQEEHRNRSRSNSRTNGAAPFSPVQASPLHPIATANQTAAYQQQLLQHQQEQAMAQAQAAMSGQLSRAASKRQQPTPPTSQHQHPRQPDINGAPRMPQTQGAAPQASARPRHRPRQSNAIDVVASLKRICSDGDPREIYRGFTKIGQGASGGVYTGHERGSNRLVAIKQMNLEQQPKKDLIINEILVMKESSHPNIVNFIDSYLCAGELWVVMEYMEGGSLTDVVTFNIMTEGQIASVCRETLRGLQHLHSKGVIHRDIKSDNILLSMEGNIKLTDFGFCATINEAQSKRTTMVGTPYWMAPEVVTRKEYGRKVDIWSLGIMAIEMIEGEPPYLTESPLRALWLIATNGTPHIKDEQSLSPVFRDFLYFALKVDPEKRASAHDLLRHDFMNKCVDLSTLAPLVRAAREARAQEKARKGQ.

The segment covering 1-17 (MDGQLSLLSPTSSSSTS) has biased composition (low complexity). Disordered stretches follow at residues 1-165 (MDGQ…YDPL) and 203-316 (AAPA…RKKS). Residues 18-28 (HSRKRLTKKQR) show a composition bias toward basic residues. Polar residues-rich tracts occupy residues 33–42 (NHRTSSSFNV), 57–75 (SASSLRQGPNCNQSPSLAR), and 100–121 (RSHTTRSQSANRPYNPTQTIPT). Composition is skewed to low complexity over residues 127–136 (SPASSSQPQT), 143–153 (SAVASTTVTSS), and 203–214 (AAPAPTSTTTIA). Residues 224-234 (VAPPPPPPPPA) show a composition bias toward pro residues. Composition is skewed to low complexity over residues 245–256 (ARSSKPSKSPKS) and 265–277 (ASSFRHSASFSSA). The region spanning 334–347 (ISAPENPVHVTHVG) is the CRIB domain. 2 disordered regions span residues 440-562 (PMIS…VQAS) and 587-655 (QAMA…SNAI). Composition is skewed to pro residues over residues 463-475 (RAPPPVPKGPGPL) and 514-527 (MPPPGDEAPMPYLP). The 252-residue stretch at 674–925 (YRGFTKIGQG…AHDLLRHDFM (252 aa)) folds into the Protein kinase domain. ATP is bound by residues 680–688 (IGQGASGGV) and Lys703. Asp793 serves as the catalytic Proton acceptor.

It belongs to the protein kinase superfamily. STE Ser/Thr protein kinase family. STE20 subfamily.

It is found in the cytoplasm. The protein localises to the nucleus. It catalyses the reaction L-seryl-[protein] + ATP = O-phospho-L-seryl-[protein] + ADP + H(+). The enzyme catalyses L-threonyl-[protein] + ATP = O-phospho-L-threonyl-[protein] + ADP + H(+). Its function is as follows. MAP4K component of the MAPK pathway required for the mating pheromone response and the regulation of cell polarity and cell cycle. Phosphorylates histone H2B to form H2BS10ph. The sequence is that of Serine/threonine-protein kinase ste20 (stk-4) from Neurospora crassa (strain ATCC 24698 / 74-OR23-1A / CBS 708.71 / DSM 1257 / FGSC 987).